Reading from the N-terminus, the 863-residue chain is Leucine--tRNA ligase (863 aa).

The short motif at 42–52 (PYPSGKIHMGH) is the 'HIGH' region element. Positions 618–622 (KMSKS) match the 'KMSKS' region motif. Residue lysine 621 coordinates ATP.

Belongs to the class-I aminoacyl-tRNA synthetase family.

Its subcellular location is the cytoplasm. It carries out the reaction tRNA(Leu) + L-leucine + ATP = L-leucyl-tRNA(Leu) + AMP + diphosphate. The sequence is that of Leucine--tRNA ligase from Desulfatibacillum aliphaticivorans.